The chain runs to 138 residues: Holo-[acyl-carrier-protein] synthase (138 aa).

Mg(2+) is bound by residues Asp11 and Glu65.

This sequence belongs to the P-Pant transferase superfamily. AcpS family. Mg(2+) is required as a cofactor.

The protein resides in the cytoplasm. It catalyses the reaction apo-[ACP] + CoA = holo-[ACP] + adenosine 3',5'-bisphosphate + H(+). Functionally, transfers the 4'-phosphopantetheine moiety from coenzyme A to a Ser of acyl-carrier-protein. The protein is Holo-[acyl-carrier-protein] synthase of Ralstonia nicotianae (strain ATCC BAA-1114 / GMI1000) (Ralstonia solanacearum).